Here is a 138-residue protein sequence, read N- to C-terminus: F-box protein At4g12382 (138 aa).

The 47-residue stretch at 7-53 (NPSFADLPSSLIEVIMSHLALKNNIRASAACKSWYEVGVSVRVVEKH) folds into the F-box domain.

This chain is F-box protein At4g12382, found in Arabidopsis thaliana (Mouse-ear cress).